The following is a 257-amino-acid chain: Hydroxyacylglutathione hydrolase (257 aa).

7 residues coordinate Zn(2+): His-56, His-58, Asp-60, His-61, His-112, Asp-131, and His-169.

Belongs to the metallo-beta-lactamase superfamily. Glyoxalase II family. As to quaternary structure, monomer. The cofactor is Zn(2+).

It catalyses the reaction an S-(2-hydroxyacyl)glutathione + H2O = a 2-hydroxy carboxylate + glutathione + H(+). It participates in secondary metabolite metabolism; methylglyoxal degradation; (R)-lactate from methylglyoxal: step 2/2. Functionally, thiolesterase that catalyzes the hydrolysis of S-D-lactoyl-glutathione to form glutathione and D-lactic acid. The polypeptide is Hydroxyacylglutathione hydrolase (Ectopseudomonas mendocina (strain ymp) (Pseudomonas mendocina)).